A 260-amino-acid chain; its full sequence is Imidazole glycerol phosphate synthase subunit HisF (260 aa).

Catalysis depends on residues aspartate 11 and aspartate 130.

This sequence belongs to the HisA/HisF family. As to quaternary structure, heterodimer of HisH and HisF.

Its subcellular location is the cytoplasm. The catalysed reaction is 5-[(5-phospho-1-deoxy-D-ribulos-1-ylimino)methylamino]-1-(5-phospho-beta-D-ribosyl)imidazole-4-carboxamide + L-glutamine = D-erythro-1-(imidazol-4-yl)glycerol 3-phosphate + 5-amino-1-(5-phospho-beta-D-ribosyl)imidazole-4-carboxamide + L-glutamate + H(+). It functions in the pathway amino-acid biosynthesis; L-histidine biosynthesis; L-histidine from 5-phospho-alpha-D-ribose 1-diphosphate: step 5/9. Functionally, IGPS catalyzes the conversion of PRFAR and glutamine to IGP, AICAR and glutamate. The HisF subunit catalyzes the cyclization activity that produces IGP and AICAR from PRFAR using the ammonia provided by the HisH subunit. The sequence is that of Imidazole glycerol phosphate synthase subunit HisF from Caulobacter sp. (strain K31).